A 69-amino-acid polypeptide reads, in one-letter code: Putative membrane protein insertion efficiency factor (69 aa).

The protein belongs to the UPF0161 family.

It is found in the cell inner membrane. In terms of biological role, could be involved in insertion of integral membrane proteins into the membrane. This Nitrosomonas eutropha (strain DSM 101675 / C91 / Nm57) protein is Putative membrane protein insertion efficiency factor.